The primary structure comprises 441 residues: UDP-N-acetylmuramoylalanine--D-glutamate ligase (441 aa).

An ATP-binding site is contributed by 113-119; sequence GSNAKST.

Belongs to the MurCDEF family.

The protein localises to the cytoplasm. The enzyme catalyses UDP-N-acetyl-alpha-D-muramoyl-L-alanine + D-glutamate + ATP = UDP-N-acetyl-alpha-D-muramoyl-L-alanyl-D-glutamate + ADP + phosphate + H(+). It functions in the pathway cell wall biogenesis; peptidoglycan biosynthesis. Its function is as follows. Cell wall formation. Catalyzes the addition of glutamate to the nucleotide precursor UDP-N-acetylmuramoyl-L-alanine (UMA). This chain is UDP-N-acetylmuramoylalanine--D-glutamate ligase, found in Alcanivorax borkumensis (strain ATCC 700651 / DSM 11573 / NCIMB 13689 / SK2).